The following is a 282-amino-acid chain: Reaction center protein L chain (282 aa).

Residues 2–32 are Cytoplasmic-facing; it reads ALLSFERKYRVPGGTLVGGNLFDFWVGPFYV. The chain crosses the membrane as a helical span at residues 33-56; it reads GFFGVATFFFAALGIILIAWSAVL. The Periplasmic segment spans residues 57 to 83; the sequence is QGTWNPQLISVYPPALEYGLGGAPLAK. The chain crosses the membrane as a helical span at residues 84 to 112; that stretch reads GGLWQIITICATGAFVSWALREVEICRKL. At 113–116 the chain is on the cytoplasmic side; it reads GIGY. A helical membrane pass occupies residues 117-139; it reads HIPFAFAFAILAYLTLVLFRPVM. Residues 140–171 lie on the Periplasmic side of the membrane; that stretch reads MGAWGYAFPYGIWTHLDWVSNTGYTYGNFHYN. 2 residues coordinate (7R,8Z)-bacteriochlorophyll b: His154 and His174. Residues 172 to 199 traverse the membrane as a helical segment; that stretch reads PAHMIAISFFFTNALALALHGALVLSAA. Residue His191 participates in Fe cation binding. The Cytoplasmic segment spans residues 200 to 225; that stretch reads NPEKGKEMRTPDHEDTFFRDLVGYSI. An a ubiquinone-binding site is contributed by Phe217. Residues 226-251 form a helical membrane-spanning segment; that stretch reads GTLGIHRLGLLLSLSAVFFSALCMII. His231 contacts Fe cation. The Periplasmic portion of the chain corresponds to 252-282; the sequence is TGTIWFDQWVDWWQWWVKLPWWANIPGGING.

The protein belongs to the reaction center PufL/M/PsbA/D family. In terms of assembly, reaction center is composed of four bacteriochlorophylls, two bacteriopheophytins, two ubiquinones, one iron, and three highly hydrophobic polypeptide chains (designated L, M, and H).

It is found in the cellular chromatophore membrane. The reaction center is a membrane-bound complex that mediates the initial photochemical event in the electron transfer process of photosynthesis. In Cereibacter sphaeroides (strain ATCC 17023 / DSM 158 / JCM 6121 / CCUG 31486 / LMG 2827 / NBRC 12203 / NCIMB 8253 / ATH 2.4.1.) (Rhodobacter sphaeroides), this protein is Reaction center protein L chain (pufL).